Here is a 444-residue protein sequence, read N- to C-terminus: Serine--tRNA ligase (444 aa).

249–251 (TAE) serves as a coordination point for L-serine. ATP is bound by residues 280–282 (RRE) and V296. E303 is an L-serine binding site. 367–370 (EIVS) is a binding site for ATP. T401 provides a ligand contact to L-serine.

The protein belongs to the class-II aminoacyl-tRNA synthetase family. Type-1 seryl-tRNA synthetase subfamily. Homodimer. The tRNA molecule binds across the dimer.

The protein localises to the cytoplasm. The enzyme catalyses tRNA(Ser) + L-serine + ATP = L-seryl-tRNA(Ser) + AMP + diphosphate + H(+). It catalyses the reaction tRNA(Sec) + L-serine + ATP = L-seryl-tRNA(Sec) + AMP + diphosphate + H(+). The protein operates within aminoacyl-tRNA biosynthesis; selenocysteinyl-tRNA(Sec) biosynthesis; L-seryl-tRNA(Sec) from L-serine and tRNA(Sec): step 1/1. Functionally, catalyzes the attachment of serine to tRNA(Ser). Is also able to aminoacylate tRNA(Sec) with serine, to form the misacylated tRNA L-seryl-tRNA(Sec), which will be further converted into selenocysteinyl-tRNA(Sec). This chain is Serine--tRNA ligase, found in Picrophilus torridus (strain ATCC 700027 / DSM 9790 / JCM 10055 / NBRC 100828 / KAW 2/3).